A 640-amino-acid polypeptide reads, in one-letter code: 1,4-alpha-glucan branching enzyme GlgB (640 aa).

Asp318 functions as the Nucleophile in the catalytic mechanism. The active-site Proton donor is the Glu371.

It belongs to the glycosyl hydrolase 13 family. GlgB subfamily. Monomer.

It catalyses the reaction Transfers a segment of a (1-&gt;4)-alpha-D-glucan chain to a primary hydroxy group in a similar glucan chain.. It functions in the pathway glycan biosynthesis; glycogen biosynthesis. Catalyzes the formation of the alpha-1,6-glucosidic linkages in glycogen by scission of a 1,4-alpha-linked oligosaccharide from growing alpha-1,4-glucan chains and the subsequent attachment of the oligosaccharide to the alpha-1,6 position. The polypeptide is 1,4-alpha-glucan branching enzyme GlgB (Francisella tularensis subsp. tularensis (strain FSC 198)).